The primary structure comprises 581 residues: uncharacterized protein (581 aa).

The next 12 membrane-spanning stretches (helical) occupy residues 84–104 (MISV…SAFA), 109–129 (ASVI…IYAL), 149–169 (FIDP…YFVT), 187–207 (INSA…NLFG), 216–236 (FILS…AIII), 266–286 (FCSV…IGLA), 304–324 (VFWR…LLVS), 348–368 (ANIK…VVSV), 399–419 (VGRP…AYIN), 432–452 (VFDW…GSIC), 485–505 (IGLG…LFLI), and 514–534 (FFQG…YKIY).

It belongs to the amino acid-polyamine-organocation (APC) superfamily.

It is found in the membrane. This is an uncharacterized protein from Schizosaccharomyces pombe (strain 972 / ATCC 24843) (Fission yeast).